We begin with the raw amino-acid sequence, 93 residues long: Neurophysin 1 (93 aa).

7 cysteine pairs are disulfide-bonded: cysteine 10/cysteine 54, cysteine 13/cysteine 27, cysteine 21/cysteine 44, cysteine 28/cysteine 34, cysteine 61/cysteine 74, cysteine 68/cysteine 86, and cysteine 75/cysteine 80.

Belongs to the vasopressin/oxytocin family.

In terms of biological role, neurophysin 1 specifically binds oxytocin. This chain is Neurophysin 1, found in Struthio camelus (Common ostrich).